The following is a 578-amino-acid chain: Keratin, type II cytoskeletal 1b (578 aa).

Residues 1 to 163 (MSHQFSSQSA…DPEIQRIKTQ (163 aa)) are head. Omega-N-methylarginine is present on R95. Residues 164-200 (EREQIMVLNNKFASFIDKVRFLEQQNQVLQTKWELLQ) form a coil 1A region. Residues 164–477 (EREQIMVLNN…QLLEGEESRM (314 aa)) enclose the IF rod domain. The tract at residues 201–219 (QVNTSTGTNNLEPLLENYI) is linker 1. Residues 220-311 (GDLRRQVDLL…LFLTELSQVQ (92 aa)) form a coil 1B region. The linker 12 stretch occupies residues 312-335 (THISDTNVILSMDNNRSLDLDSII). A coil 2 region spans residues 336–474 (DAVRTQYELI…TYRQLLEGEE (139 aa)). The tract at residues 475–578 (SRMSGELQSH…TNTSHRRILE (104 aa)) is tail. R523 carries the omega-N-methylarginine modification. Residues 547–556 (GSYGGSGRSG) show a composition bias toward gly residues. The tract at residues 547 to 578 (GSYGGSGRSGRGSSRVQIIQTSTNTSHRRILE) is disordered. Polar residues predominate over residues 562–571 (VQIIQTSTNT).

Belongs to the intermediate filament family. Undergoes deimination of some arginine residues (citrullination). As to expression, expressed exclusively in skin.

The polypeptide is Keratin, type II cytoskeletal 1b (KRT77) (Homo sapiens (Human)).